We begin with the raw amino-acid sequence, 208 residues long: Fibroblast growth factor 6 (208 aa).

Positions 1–37 (MALGQRLFITMSRGAGRVQGTLQALVFLGVLVGMVVP) are cleaved as a signal peptide. Asn-45 carries an N-linked (GlcNAc...) asparagine glycan. Cys-90 and Cys-157 form a disulfide bridge.

It belongs to the heparin-binding growth factors family. In terms of assembly, interacts with FGFR1, FGFR2 and FGFR4. Affinity between fibroblast growth factors (FGFs) and their receptors is increased by heparan sulfate glycosaminoglycans that function as coreceptors. Embryos, adult muscles and adult testis.

The protein localises to the secreted. It localises to the extracellular space. Functionally, plays an important role in the regulation of cell proliferation, cell differentiation, angiogenesis and myogenesis, and is required for normal muscle regeneration. This is Fibroblast growth factor 6 (Fgf6) from Mus musculus (Mouse).